Here is a 501-residue protein sequence, read N- to C-terminus: ATP synthase subunit alpha (501 aa).

169–176 (GDRQTGKT) is an ATP binding site.

This sequence belongs to the ATPase alpha/beta chains family. In terms of assembly, F-type ATPases have 2 components, CF(1) - the catalytic core - and CF(0) - the membrane proton channel. CF(1) has five subunits: alpha(3), beta(3), gamma(1), delta(1), epsilon(1). CF(0) has three main subunits: a(1), b(2) and c(9-12). The alpha and beta chains form an alternating ring which encloses part of the gamma chain. CF(1) is attached to CF(0) by a central stalk formed by the gamma and epsilon chains, while a peripheral stalk is formed by the delta and b chains.

It localises to the cell membrane. The enzyme catalyses ATP + H2O + 4 H(+)(in) = ADP + phosphate + 5 H(+)(out). Functionally, produces ATP from ADP in the presence of a proton gradient across the membrane. The alpha chain is a regulatory subunit. This Desulforamulus reducens (strain ATCC BAA-1160 / DSM 100696 / MI-1) (Desulfotomaculum reducens) protein is ATP synthase subunit alpha.